Consider the following 963-residue polypeptide: SH3 domain-binding protein 4 (963 aa).

Residues 55-114 (GNAKEVIAIKDYCPTNFTTLKFSKGDHLYVLDTSGGEWWYAHNTTEMGYIPSSYVQPLNY) form the SH3 1 domain. Residues serine 131, serine 246, serine 251, serine 279, and serine 296 each carry the phosphoserine modification. The region spanning 317 to 454 (TNIVCKLDSS…LEPCMYVAVV (138 aa)) is the ZU5 domain. A Phosphoserine modification is found at serine 637. Positions 654–724 (SSLKFGKLLK…HTKNVLVVGR (71 aa)) constitute an SH3 2 domain.

In terms of assembly, homodimer or homooligomer. Interacts with DNM2, EPS15, clathrin, the adapter protein complex 2/AP-2 and TFRC. Interacts with the Rag GTPases RRAGA, RRAGB, RRAGC and RRAGD; the interaction is most probably direct, preferentially occurs with their inactive GDP-bound form and is negatively regulated by amino acids. (Microbial infection) Interacts with molluscum contagiosum virus protein MC159L; this interaction is important for the suppression of autophagy. Phosphorylated upon EGF stimulation. Phosphorylation prevents interaction with DNM2. In terms of tissue distribution, expressed in all tissues tested with higher expression in pancreas. Expressed by retinal pigment epithelial cells (at protein level).

It localises to the membrane. The protein resides in the clathrin-coated pit. It is found in the cytoplasmic vesicle. Its subcellular location is the clathrin-coated vesicle. The protein localises to the nucleus. In terms of biological role, may function in transferrin receptor internalization at the plasma membrane through a cargo-specific control of clathrin-mediated endocytosis. Alternatively, may act as a negative regulator of the amino acid-induced TOR signaling by inhibiting the formation of active Rag GTPase complexes. Preferentially binds inactive Rag GTPase complexes and prevents their interaction with the mTORC1 complex inhibiting its relocalization to lysosomes and its activation. Thereby, may indirectly regulate cell growth, proliferation and autophagy. The protein is SH3 domain-binding protein 4 (SH3BP4) of Homo sapiens (Human).